We begin with the raw amino-acid sequence, 345 residues long: DNA-directed RNA polymerase subunit alpha (345 aa).

Residues 1 to 234 are alpha N-terminal domain (alpha-NTD); it reads MRKNEMSTSK…DLLTTFLYVR (234 aa). Residues 266–345 are alpha C-terminal domain (alpha-CTD); that stretch reads LEERVLENRF…DKKIVLNRRK (80 aa).

This sequence belongs to the RNA polymerase alpha chain family. As to quaternary structure, in plastids the minimal PEP RNA polymerase catalytic core is composed of four subunits: alpha, beta, beta', and beta''. When a (nuclear-encoded) sigma factor is associated with the core the holoenzyme is formed, which can initiate transcription.

It localises to the plastid. Its subcellular location is the chloroplast. It catalyses the reaction RNA(n) + a ribonucleoside 5'-triphosphate = RNA(n+1) + diphosphate. DNA-dependent RNA polymerase catalyzes the transcription of DNA into RNA using the four ribonucleoside triphosphates as substrates. The sequence is that of DNA-directed RNA polymerase subunit alpha from Adiantum capillus-veneris (Maidenhair fern).